Reading from the N-terminus, the 230-residue chain is Esterase OVCA2 (230 aa).

Catalysis depends on charge relay system residues Ser-124, Asp-182, and His-209.

It belongs to the LovG family.

It carries out the reaction a carboxylic ester + H2O = an alcohol + a carboxylate + H(+). Exhibits ester hydrolase activity with a strong preference for long-chain alkyl ester substrates and high selectivity against a variety of short, branched, and substituted esters. Is able to hydrolyze ester bonds within a wide range of p-nitrophenyl derivatives (C2-C14) in vitro, with a strong preference toward substrates of &gt;8 carbons. This Xenopus tropicalis (Western clawed frog) protein is Esterase OVCA2 (ovca2).